Reading from the N-terminus, the 809-residue chain is Sodium/hydrogen exchanger 2 (809 aa).

The next 7 helical transmembrane spans lie at Ile-107–Gly-127, Thr-138–Pro-158, Ile-169–Phe-189, Leu-209–Ile-229, Ile-237–Phe-257, Phe-278–Phe-298, and Val-308–Phe-328. Asn-350 carries an N-linked (GlcNAc...) asparagine glycan. A run of 4 helical transmembrane segments spans residues Tyr-361 to Ser-381, Ala-392 to Leu-412, Phe-430 to Pro-450, and Leu-459 to Ile-479. 2 stretches are compositionally biased toward basic and acidic residues: residues Ile-648 to Ala-660 and Arg-793 to Pro-809. Disordered stretches follow at residues Ile-648–Ala-700 and Glu-734–Pro-809.

Belongs to the monovalent cation:proton antiporter 1 (CPA1) transporter (TC 2.A.36) family. As to quaternary structure, interacts with CHP1 and CHP2. As to expression, high levels in intestine and kidney. Strongly expressed in gastric epithelial cells, with particularly high expression levels in mucous cells.

The protein resides in the apical cell membrane. The enzyme catalyses Na(+)(in) + H(+)(out) = Na(+)(out) + H(+)(in). Its function is as follows. Plasma membrane Na(+)/H(+) antiporter. Mediates the electroneutral exchange of intracellular H(+) ions for extracellular Na(+). Major apical Na(+)/H(+) exchanger in the base of the colonic crypt. Controls in the colonic crypt intracellular pH (pHi) to direct colonic epithelial cell differentiation into the absorptive enterocyte lineage at the expense of the secretory lineage. This Oryctolagus cuniculus (Rabbit) protein is Sodium/hydrogen exchanger 2 (SLC9A2).